Here is a 512-residue protein sequence, read N- to C-terminus: Serine--tRNA ligase, cytoplasmic (512 aa).

The residue at position 1 (M1) is an N-acetylmethionine. Positions 9–61 are interaction with tRNA; it reads RVDKGGDPALIRETQEKRFKDPGLVDQLVKADSEWRRCRFRADNLNKLKNLCS. S241 is subject to Phosphoserine. Residues T271 and R302 each coordinate L-serine. Residues 302 to 304 and 318 to 321 contribute to the ATP site; these read RQE and VHQF. Position 323 is an N6-acetyllysine (K323). An L-serine-binding site is contributed by E325. 391 to 394 serves as a coordination point for ATP; that stretch reads ELVS. Residue N427 coordinates L-serine. Positions 472 to 512 are disordered; sequence KPAPIDQEPSKKQKKQHEGSKKKAKEVTLENQLQNMEVTEA. Over residues 479 to 499 the composition is skewed to basic and acidic residues; the sequence is EPSKKQKKQHEGSKKKAKEVT. A Nuclear localization signal motif is present at residues 482 to 494; it reads KKQKKQHEGSKKK. Over residues 500–512 the composition is skewed to polar residues; that stretch reads LENQLQNMEVTEA.

It belongs to the class-II aminoacyl-tRNA synthetase family. Type-1 seryl-tRNA synthetase subfamily. Homodimer. The tRNA molecule may bind across the dimer. Interacts with SIRT2. Interacts with METTL6; interaction is required for the tRNA N(3)-methylcytidine methyltransferase activity of METTL6.

Its subcellular location is the cytoplasm. The protein resides in the nucleus. The catalysed reaction is tRNA(Ser) + L-serine + ATP = L-seryl-tRNA(Ser) + AMP + diphosphate + H(+). It catalyses the reaction tRNA(Sec) + L-serine + ATP = L-seryl-tRNA(Sec) + AMP + diphosphate + H(+). It functions in the pathway aminoacyl-tRNA biosynthesis; selenocysteinyl-tRNA(Sec) biosynthesis; L-seryl-tRNA(Sec) from L-serine and tRNA(Sec): step 1/1. Its function is as follows. Catalyzes the attachment of serine to tRNA(Ser) in a two-step reaction: serine is first activated by ATP to form Ser-AMP and then transferred to the acceptor end of tRNA(Ser). Is probably also able to aminoacylate tRNA(Sec) with serine, to form the misacylated tRNA L-seryl-tRNA(Sec), which will be further converted into selenocysteinyl-tRNA(Sec). In the nucleus, binds to the VEGFA core promoter and prevents MYC binding and transcriptional activation by MYC. Recruits SIRT2 to the VEGFA promoter, promoting deacetylation of histone H4 at 'Lys-16' (H4K16). Thereby, inhibits the production of VEGFA and sprouting angiogenesis mediated by VEGFA. The chain is Serine--tRNA ligase, cytoplasmic (Sars1) from Rattus norvegicus (Rat).